The chain runs to 80 residues: UPF0248 protein M1425_2629 (80 aa).

It belongs to the UPF0248 family.

The sequence is that of UPF0248 protein M1425_2629 from Saccharolobus islandicus (strain M.14.25 / Kamchatka #1) (Sulfolobus islandicus).